The chain runs to 175 residues: Bifunctional protein PyrR (175 aa).

Substrate contacts are provided by residues 40–41, Arg85, 102–110, Arg135, and Val159; these read TR and DDVLYTGRT. A PRPP-binding motif is present at residues 98-110; that stretch reads VVIIDDVLYTGRT.

The protein belongs to the purine/pyrimidine phosphoribosyltransferase family. PyrR subfamily. Homodimer and homohexamer; in equilibrium.

It carries out the reaction UMP + diphosphate = 5-phospho-alpha-D-ribose 1-diphosphate + uracil. Functionally, regulates transcriptional attenuation of the pyrimidine nucleotide (pyr) operon by binding in a uridine-dependent manner to specific sites on pyr mRNA. This disrupts an antiterminator hairpin in the RNA and favors formation of a downstream transcription terminator, leading to a reduced expression of downstream genes. In terms of biological role, also displays a weak uracil phosphoribosyltransferase activity which is not physiologically significant. The protein is Bifunctional protein PyrR of Staphylococcus epidermidis (strain ATCC 35984 / DSM 28319 / BCRC 17069 / CCUG 31568 / BM 3577 / RP62A).